We begin with the raw amino-acid sequence, 372 residues long: Lipoyl synthase, mitochondrial (372 aa).

The N-terminal 27 residues, 1 to 27 (MSLRCGDAARTLGPRVFGRYFCSPVRP), are a transit peptide targeting the mitochondrion. [4Fe-4S] cluster is bound by residues Cys-106, Cys-111, Cys-117, Cys-137, Cys-141, Cys-144, and Ser-352. Residues 122-341 (EYATATATIM…EKVGNELGFH (220 aa)) enclose the Radical SAM core domain.

Belongs to the radical SAM superfamily. Lipoyl synthase family. Requires [4Fe-4S] cluster as cofactor.

It localises to the mitochondrion. The catalysed reaction is [[Fe-S] cluster scaffold protein carrying a second [4Fe-4S](2+) cluster] + N(6)-octanoyl-L-lysyl-[protein] + 2 oxidized [2Fe-2S]-[ferredoxin] + 2 S-adenosyl-L-methionine + 4 H(+) = [[Fe-S] cluster scaffold protein] + N(6)-[(R)-dihydrolipoyl]-L-lysyl-[protein] + 4 Fe(3+) + 2 hydrogen sulfide + 2 5'-deoxyadenosine + 2 L-methionine + 2 reduced [2Fe-2S]-[ferredoxin]. It functions in the pathway protein modification; protein lipoylation via endogenous pathway; protein N(6)-(lipoyl)lysine from octanoyl-[acyl-carrier-protein]: step 2/2. Its function is as follows. Catalyzes the radical-mediated insertion of two sulfur atoms into the C-6 and C-8 positions of the octanoyl moiety bound to the lipoyl domains of lipoate-dependent enzymes, thereby converting the octanoylated domains into lipoylated derivatives. This Homo sapiens (Human) protein is Lipoyl synthase, mitochondrial.